We begin with the raw amino-acid sequence, 120 residues long: Accessory gland protein Acp53Ea (120 aa).

Positions 1–23 are cleaved as a signal peptide; the sequence is MKLIKVTLVFSLLALVFVAQTEA.

As to expression, main cells of accessory gland and seminal fluid.

The protein localises to the secreted. In terms of biological role, responsible for physiological and behavioral changes in mated female flies. This is Accessory gland protein Acp53Ea (Acp53Ea) from Drosophila melanogaster (Fruit fly).